The primary structure comprises 1937 residues: Myosin-2 (1937 aa).

The Myosin N-terminal SH3-like domain maps to 33-82; that stretch reads DAKTSVFVAEPKESFVKGTIQSREGGKVTVKTDAGATLTVKEDQVFPMNP. Residues Thr64 and Thr69 each carry the phosphothreonine modification. The Myosin motor domain occupies 86–780; it reads DKIEDMAMMT…LLGLLEEMRD (695 aa). N6,N6,N6-trimethyllysine is present on Lys130. 179 to 186 contacts ATP; it reads GESGAGKT. Tyr387 bears the Phosphotyrosine mark. At Thr417 the chain carries Phosphothreonine. Ser623 is modified (phosphoserine). The segment at 657–679 is actin-binding; sequence LNKLMTNLRSTHPHFVRCIIPNE. Residue His755 is modified to Pros-methylhistidine. Positions 759–773 are actin-binding; the sequence is KFGHTKVFFKAGLLG. One can recognise an IQ domain in the interval 783–812; it reads LAQIITRTQARCRGFLARVEYQKMVERRES. The stretch at 841–1937 forms a coiled coil; sequence LLKSAETEKE…EVHTKIISEE (1097 aa). At Ser1094 the chain carries Phosphoserine. Disordered regions lie at residues 1124 to 1145 and 1151 to 1170; these read IEAE…SREL and RLEE…KKRE. Residues 1126 to 1145 show a composition bias toward basic and acidic residues; that stretch reads AERASRAKAEKQRSDLSREL. A phosphoserine mark is found at Ser1160 and Ser1235. Phosphothreonine is present on Thr1239. A Phosphoserine modification is found at Ser1241. At Thr1253 the chain carries Phosphothreonine. Residue Ser1259 is modified to Phosphoserine. Thr1284 bears the Phosphothreonine mark. Residues Ser1290, Ser1301, and Ser1304 each carry the phosphoserine modification. At Tyr1462 the chain carries Phosphotyrosine. At Thr1465 the chain carries Phosphothreonine. Ser1472 bears the Phosphoserine mark. Tyr1490 carries the post-translational modification Phosphotyrosine. Ser1493 is modified (phosphoserine). Thr1499 carries the phosphothreonine modification. At Ser1512 the chain carries Phosphoserine. Thr1515 is modified (phosphothreonine). Phosphoserine occurs at positions 1540, 1552, 1572, 1712, and 1724. Thr1728 and Thr1734 each carry phosphothreonine. Ser1737 is subject to Phosphoserine. Residues 1883 to 1913 form a disordered region; the sequence is QAEEAEEQSNTNLSKFRKLQHELEEAEERAD.

This sequence belongs to the TRAFAC class myosin-kinesin ATPase superfamily. Myosin family. Muscle myosin is a hexameric protein that consists of 2 heavy chain subunits (MHC), 2 alkali light chain subunits (MLC) and 2 regulatory light chain subunits (MLC-2). Interacts with GCSAM.

It is found in the cytoplasm. Its subcellular location is the myofibril. Its function is as follows. Myosins are actin-based motor molecules with ATPase activity essential for muscle contraction. The protein is Myosin-2 (MYH2) of Equus caballus (Horse).